An 863-amino-acid polypeptide reads, in one-letter code: Alanine--tRNA ligase (863 aa).

Histidine 552, histidine 556, cysteine 654, and histidine 658 together coordinate Zn(2+).

It belongs to the class-II aminoacyl-tRNA synthetase family. It depends on Zn(2+) as a cofactor.

Its subcellular location is the cytoplasm. It carries out the reaction tRNA(Ala) + L-alanine + ATP = L-alanyl-tRNA(Ala) + AMP + diphosphate. Catalyzes the attachment of alanine to tRNA(Ala) in a two-step reaction: alanine is first activated by ATP to form Ala-AMP and then transferred to the acceptor end of tRNA(Ala). Also edits incorrectly charged Ser-tRNA(Ala) and Gly-tRNA(Ala) via its editing domain. The chain is Alanine--tRNA ligase from Nitrosomonas europaea (strain ATCC 19718 / CIP 103999 / KCTC 2705 / NBRC 14298).